The chain runs to 288 residues: MSKKSSLGRGLDALLTKKGEPVAQAGTGTQVQTLKIERIAQAAYQPRQVFEPESLAELAQSIREKGVLQPLLVRPRGDAFEIVAGERRWRASQLAGLTELPVMIRDLGDREALEIAIVENLQREDLGPLEEARAYQALLDQGLNQEGVAQAVGKGRSTVTNALRLLTLPEPVLRALDEGSISASHARAVLTQPEADRLWAFEQIRSRGLNVREAEALKRERGGRDKGQGAPIKVNPPRAYRQLELDLSRRTGTRVKITGEDKGRVELNYGSREELDRILQILGYEAEE.

Belongs to the ParB family.

Functionally, involved in chromosome partition. Localize to both poles of the predivisional cell following completion of DNA replication. Binds to the DNA origin of replication. The chain is Probable chromosome 1-partitioning protein ParB (parB1) from Deinococcus radiodurans (strain ATCC 13939 / DSM 20539 / JCM 16871 / CCUG 27074 / LMG 4051 / NBRC 15346 / NCIMB 9279 / VKM B-1422 / R1).